A 161-amino-acid polypeptide reads, in one-letter code: Ribonuclease H (161 aa).

Residues 12 to 155 (QPQHVVIYTD…ADALANKGVE (144 aa)) form the RNase H type-1 domain. Mg(2+) contacts are provided by Asp-21, Glu-59, Asp-81, and Asp-147.

Belongs to the RNase H family. Monomer. Mg(2+) is required as a cofactor.

The protein localises to the cytoplasm. The enzyme catalyses Endonucleolytic cleavage to 5'-phosphomonoester.. Its function is as follows. Endonuclease that specifically degrades the RNA of RNA-DNA hybrids. This is Ribonuclease H from Polaromonas naphthalenivorans (strain CJ2).